Consider the following 177-residue polypeptide: Anditomin synthesis protein L (177 aa).

Transmembrane regions (helical) follow at residues 54–74 (VVNSFVSDIVLPLVSLLPFIM) and 117–137 (IVNFLGISLTLYTLAQLYMVF). N-linked (GlcNAc...) asparagine glycosylation occurs at asparagine 165.

The protein resides in the membrane. Its pathway is secondary metabolite biosynthesis; terpenoid biosynthesis. Part of the gene cluster that mediates the biosynthesis of anditomin, a fungal meroterpenoid. The first step of the pathway is the synthesis of 3,5-dimethylorsellinic acid (DMOA) by the polyketide synthase andM. DMOA is then converted to the phthalide compound 5,7-dihydroxy-4,6-dimethylphthalide (DHDMP) by the cytochrome P450 monooxygenase andK, which is further prenylated by the prenyltransferase andD to yield farnesyl-DHDMP. Further epoxidation by the FAD-dependent monooxygenase andE leads to epoxyfarnesyl-DHDMP. The next step involves the terpene cyclase andB that converts epoxyfarnesyl-DHDMP into preandiloid A through opening of the epoxide ring followed by the cyclization of the farnesyl moiety. Preandiloid A is in turn oxidized at the C-3 hydroxyl group to yield preandiloid B by the dehydrogenase andC. The dioxygenase andA is solely responsible for the dehydrogenation of preandiloid B leading to the enone preandiloid C, as well as for the intriguing structural rearrangement to generate the bicyclo[2.2.2]octane core, transforming preandiloid C into andiconin. FAD-binding monooxygenase andJ then produces andilesin D which is reduced by dehydrogenase andI to yield andilesin A. Action of acetyltransferase andG followed by a spontaneous acetate elimination leads then to andilesin B, which is in turn substrate of the short chain dehydrogenase andH to yield andilesin C. Finally, the dioxygenase andF catalyzes the transformation of andilesin C to anditomin. The exact role of andL within the anditomin biosynthetic pathway has not been identified yet. The protein is Anditomin synthesis protein L of Emericella variicolor (Aspergillus stellatus).